Here is a 157-residue protein sequence, read N- to C-terminus: Large ribosomal subunit protein uL22 (157 aa).

It belongs to the universal ribosomal protein uL22 family. Part of the 50S ribosomal subunit.

Functionally, this protein binds specifically to 23S rRNA. It makes multiple contacts with different domains of the 23S rRNA in the assembled 50S subunit and ribosome. Its function is as follows. The globular domain of the protein is located near the polypeptide exit tunnel on the outside of the subunit, while an extended beta-hairpin is found that lines the wall of the exit tunnel in the center of the 70S ribosome. This chain is Large ribosomal subunit protein uL22, found in Methanocorpusculum labreanum (strain ATCC 43576 / DSM 4855 / Z).